The chain runs to 448 residues: Divalent metal cation transporter MntH (448 aa).

The next 11 membrane-spanning stretches (helical) occupy residues 41–61 (LFAF…PGNW), 69–89 (SEFG…AVLL), 117–137 (GFVL…AEVI), 147–167 (FGIP…LVLF), 176–196 (IEVI…AEMV), 215–235 (IVTN…TVMP), 270–290 (FSLT…AAAF), 307–327 (LLNP…ALLA), 363–383 (VLAI…GINE), 384–404 (LLIF…IPLV), and 424–444 (IISW…LFYT).

It belongs to the NRAMP family.

The protein localises to the cell membrane. Its function is as follows. H(+)-stimulated, divalent metal cation uptake system. The polypeptide is Divalent metal cation transporter MntH (Listeria welshimeri serovar 6b (strain ATCC 35897 / DSM 20650 / CCUG 15529 / CIP 8149 / NCTC 11857 / SLCC 5334 / V8)).